A 252-amino-acid polypeptide reads, in one-letter code: Iron-sulfur cluster co-chaperone protein HscB homolog (252 aa).

The N-terminal 59 residues, 1-59 (MKKTKTMVASISTLIRRTYPSTNQCNSLATIQSQTQLPRESLQHHSSAEGRLRFSGRVF), are a transit peptide targeting the mitochondrion. Positions 93-165 (DYFQIFGLEK…LSRAMYIMKL (73 aa)) constitute a J domain.

This sequence belongs to the HscB family. Interacts with ISU1 and HSP70-9/HSCA1.

The protein resides in the mitochondrion. It is found in the cytoplasm. The protein localises to the cytosol. Co-chaperone required for the assembly of iron-sulfur [Fe-S] clusters in both mitochondria and cytosol. Required for the activity of iron-sulfur proteins such as aconitase and succinate dehydrogenase. Involved in iron homeostasis and may take part in the control of iron translocation from roots to shoots. This Arabidopsis thaliana (Mouse-ear cress) protein is Iron-sulfur cluster co-chaperone protein HscB homolog.